The sequence spans 118 residues: Ribonuclease P protein component (118 aa).

The protein belongs to the RnpA family. In terms of assembly, consists of a catalytic RNA component (M1 or rnpB) and a protein subunit.

The enzyme catalyses Endonucleolytic cleavage of RNA, removing 5'-extranucleotides from tRNA precursor.. Its function is as follows. RNaseP catalyzes the removal of the 5'-leader sequence from pre-tRNA to produce the mature 5'-terminus. It can also cleave other RNA substrates such as 4.5S RNA. The protein component plays an auxiliary but essential role in vivo by binding to the 5'-leader sequence and broadening the substrate specificity of the ribozyme. This Petrotoga mobilis (strain DSM 10674 / SJ95) protein is Ribonuclease P protein component.